A 151-amino-acid chain; its full sequence is 3-hydroxyacyl-[acyl-carrier-protein] dehydratase FabZ (151 aa).

H54 is an active-site residue.

This sequence belongs to the thioester dehydratase family. FabZ subfamily.

The protein localises to the cytoplasm. The enzyme catalyses a (3R)-hydroxyacyl-[ACP] = a (2E)-enoyl-[ACP] + H2O. Its function is as follows. Involved in unsaturated fatty acids biosynthesis. Catalyzes the dehydration of short chain beta-hydroxyacyl-ACPs and long chain saturated and unsaturated beta-hydroxyacyl-ACPs. This is 3-hydroxyacyl-[acyl-carrier-protein] dehydratase FabZ from Sodalis glossinidius (strain morsitans).